The following is a 1938-amino-acid chain: Autophagy-related protein 2 homolog A (1938 aa).

The 98-residue stretch at 14–111 folds into the Chorein N-terminal domain; it reads ERVCRYLLHH…QLTLQPRRGP (98 aa). A phosphoserine mark is found at Ser-765, Ser-878, Ser-892, Ser-894, Ser-1266, Ser-1301, and Ser-1309. The segment at 1242–1272 is disordered; the sequence is DLHPPPRPPSPTEIAGQKLSESPASLPSCPP. A disordered region spans residues 1315–1359; sequence LFPGERSGAPPPSPPVGGPAGSLGSCSEEKEDEREEEGDGDTLDS. Positions 1343–1359 are enriched in acidic residues; sequence EKEDEREEEGDGDTLDS. The tract at residues 1358 to 1404 is WIPI-interacting; that stretch reads DSDEFCILDAPGLGIPPRDGEPVVTQLHPGPIVVRDGYFSRPIGSTD. Ser-1402 carries the phosphoserine modification. Disordered stretches follow at residues 1438–1476 and 1614–1657; these read PHPG…GSGR and GETS…PSPP. The span at 1446 to 1464 shows a compositional bias: low complexity; sequence TGLSGPRSSPSRCSGPNRP.

Belongs to the ATG2 family. As to quaternary structure, interacts with ATG9A (via C-terminus). Interacts (via WIPI-interacting region) with WDR45B/WIPI3. Interacts (via WIPI-interacting region) with WDR45/WIPI4. Interacts with TMEM41B. Interacts with VMP1.

Its subcellular location is the preautophagosomal structure membrane. It is found in the lipid droplet. The protein localises to the endoplasmic reticulum membrane. The enzyme catalyses a 1,2-diacyl-sn-glycero-3-phospho-L-serine(in) = a 1,2-diacyl-sn-glycero-3-phospho-L-serine(out). The catalysed reaction is a 1,2-diacyl-sn-glycero-3-phosphoethanolamine(in) = a 1,2-diacyl-sn-glycero-3-phosphoethanolamine(out). In terms of biological role, lipid transfer protein involved in autophagosome assembly. Tethers the edge of the isolation membrane (IM) to the endoplasmic reticulum (ER) and mediates direct lipid transfer from ER to IM for IM expansion. Binds to the ER exit site (ERES), which is the membrane source for autophagosome formation, and extracts phospholipids from the membrane source and transfers them to ATG9 (ATG9A or ATG9B) to the IM for membrane expansion. Lipid transfer activity is enhanced by WIPI1 and WDR45/WIPI4, which promote ATG2A-association with phosphatidylinositol 3-monophosphate (PI3P)-containing membranes. Also regulates lipid droplets morphology and distribution within the cell. This is Autophagy-related protein 2 homolog A from Homo sapiens (Human).